Consider the following 217-residue polypeptide: 3,4-dihydroxy-2-butanone 4-phosphate synthase (217 aa).

Residues 37–38 (RE), Asp-42, 150–154 (RRGHT), and Glu-174 each bind D-ribulose 5-phosphate. Glu-38 is a binding site for Mg(2+). Residue His-153 participates in Mg(2+) binding.

Belongs to the DHBP synthase family. Homodimer. Mg(2+) is required as a cofactor. The cofactor is Mn(2+).

It catalyses the reaction D-ribulose 5-phosphate = (2S)-2-hydroxy-3-oxobutyl phosphate + formate + H(+). The protein operates within cofactor biosynthesis; riboflavin biosynthesis; 2-hydroxy-3-oxobutyl phosphate from D-ribulose 5-phosphate: step 1/1. Its function is as follows. Catalyzes the conversion of D-ribulose 5-phosphate to formate and 3,4-dihydroxy-2-butanone 4-phosphate. The protein is 3,4-dihydroxy-2-butanone 4-phosphate synthase of Yersinia pseudotuberculosis serotype O:1b (strain IP 31758).